The following is a 75-amino-acid chain: Small capsomere-interacting protein (75 aa).

The protein belongs to the herpesviridae small capsomere-interacting protein family. As to quaternary structure, interacts with the major capsid protein/MCP.

It is found in the virion. The protein resides in the host nucleus. Functionally, participates in the assembly of the infectious particles by decorating the outer surface of the capsid shell and thus forming a layer between the capsid and the tegument. Complexes composed of the capsid protein VP5 and UL48A assemble together in the host cytoplasm and are translocated to the nucleus, where they accumulate and participate in capsid assembly. Participates in the assembly of the infectious particles by decorating the outer surface of the capsid shell and thus forming a layer between the capsid and the tegument. Complexes composed of the major capsid protein and small capsomere-interacting protein/SCP assemble together in the host cytoplasm and are translocated to the nucleus, where they accumulate and participate in capsid assembly. This is Small capsomere-interacting protein from Homo sapiens (Human).